The sequence spans 357 residues: Prostaglandin E2 receptor EP2 subtype (357 aa).

The Extracellular segment spans residues 1-24 (MDNSFNDSRRVENCESRQYLLSDE). An N-linked (GlcNAc...) asparagine glycan is attached at asparagine 6. A helical membrane pass occupies residues 25 to 48 (SPAISSVMFTAGVLGNLIALALLA). Residues 49–66 (RRWRGDTGCSAGSRTSIS) lie on the Cytoplasmic side of the membrane. A helical transmembrane segment spans residues 67-92 (LFHVLVTELVLTDLLGTCLISPVVLA). Residues 93–112 (SYSRNQTLVALAPESRACTY) lie on the Extracellular side of the membrane. Residues cysteine 110 and cysteine 188 are joined by a disulfide bond. The helical transmembrane segment at 113–133 (FAFTMTFFSLATMLMLFAMAL) threads the bilayer. Residues 134–152 (ERYLAIGHPYFYRRRVSRR) lie on the Cytoplasmic side of the membrane. Residues 153–177 (GGLAVLPAIYGVSLLFCSLPLLNYG) traverse the membrane as a helical segment. Topologically, residues 178-199 (EYVQYCPGTWCFIQHGRTAYLQ) are extracellular. A helical membrane pass occupies residues 200-224 (LYATVLLLLIVAVLGCNISVILNLI). Residues 225–262 (RMQLRSKRSRCGLSGSSLRGPGSRRRGERTSMAEETDH) lie on the Cytoplasmic side of the membrane. A compositionally biased stretch (low complexity) spans 235–245 (CGLSGSSLRGP). Positions 235–255 (CGLSGSSLRGPGSRRRGERTS) are disordered. The chain crosses the membrane as a helical span at residues 263-286 (LILLAIMTITFAVCSLPFTIFAYM). Over 287 to 299 (DETSSRKEKWDLR) the chain is Extracellular. The helical transmembrane segment at 300 to 323 (ALRFLSVNSIIDPWVFVILRPPVL) threads the bilayer. Residues 324-357 (RLMRSVLCCRTSLRAPEAPGASCSTQQTDLCGQL) are Cytoplasmic-facing.

This sequence belongs to the G-protein coupled receptor 1 family.

It is found in the cell membrane. Functionally, receptor for prostaglandin E2 (PGE2). The activity of this receptor is mediated by G(s) proteins that stimulate adenylate cyclase. The subsequent raise in intracellular cAMP is responsible for the relaxing effect of this receptor on smooth muscle. This chain is Prostaglandin E2 receptor EP2 subtype (Ptger2), found in Rattus norvegicus (Rat).